The following is a 645-amino-acid chain: 1-deoxy-D-xylulose-5-phosphate synthase 1 (645 aa).

Thiamine diphosphate-binding positions include H79 and 120-122 (GHS). Position 151 (D151) interacts with Mg(2+). Thiamine diphosphate-binding positions include 152–153 (GS), N180, Y291, and E373. N180 is a Mg(2+) binding site.

The protein belongs to the transketolase family. DXPS subfamily. Homodimer. Mg(2+) is required as a cofactor. The cofactor is thiamine diphosphate.

The enzyme catalyses D-glyceraldehyde 3-phosphate + pyruvate + H(+) = 1-deoxy-D-xylulose 5-phosphate + CO2. It functions in the pathway metabolic intermediate biosynthesis; 1-deoxy-D-xylulose 5-phosphate biosynthesis; 1-deoxy-D-xylulose 5-phosphate from D-glyceraldehyde 3-phosphate and pyruvate: step 1/1. Catalyzes the acyloin condensation reaction between C atoms 2 and 3 of pyruvate and glyceraldehyde 3-phosphate to yield 1-deoxy-D-xylulose-5-phosphate (DXP). This Rhodospirillum rubrum (strain ATCC 11170 / ATH 1.1.1 / DSM 467 / LMG 4362 / NCIMB 8255 / S1) protein is 1-deoxy-D-xylulose-5-phosphate synthase 1.